The primary structure comprises 564 residues: MLANSASVRILIKGGKVVNDDCTHEADVYIENGIIQQVGRELMIPGGAKVIDATGKLVIPGGIDTSTHFHQTFMNATCVDDFYHGTKAALVGGTTMIIGHVLPDKETSLVDAYEKCRGLADPKVCCDYALHVGITWWAPKVKAEMETLVREKGVNSFQMFMTYKDLYMLRDSELYQVLHACKDIGAIARVHAENGELVAEGAKEALDLGITGPEGIEISRPEELEAEATHRVITIANRTHCPIYLVNVSSISAGDVIAAAKMQGKVVLAETTTAHATLTGLHYYHQDWSHAAAYVTVPPLRLDTNTSTYLMSLLANDTLNIVASDHRPFTTKQKAMGKEDFTKIPHGVSGVQDRMSVIWERGVVGGKMDENRFVAVTSSNAAKLLNLYPRKGRIIPGADADVVVWDPEATKTISASTQVQGGDFNLYENMRCHGVPLVTISRGRVVYENGVFMCAEGTGKFCPLRSFPDTVYKKLVQREKTLKVRGVDRTPYLGDVAVVVHPGKKEMGTPLADTPTRPVTRHGGMRDLHESSFSLSGSQIDDHVPKRASARILAPPGGRSSGIW.

Phosphothreonine is present on residues T509 and T514. Phosphoserine is present on residues S532 and S538. R559 carries the omega-N-methylarginine modification.

This sequence belongs to the metallo-dependent hydrolases superfamily. Hydantoinase/dihydropyrimidinase family. As to quaternary structure, homotetramer, and heterotetramer with other DPYS-like proteins. Interacts with DPYSL2, DPYSL3 and DPYSL4. Interacts with MAP2 and TUBB3.

It localises to the cytoplasm. In terms of biological role, involved in the negative regulation of dendrite outgrowth. This is Dihydropyrimidinase-related protein 5 (DPYSL5) from Homo sapiens (Human).